The chain runs to 454 residues: Glycosyl hydrolase family 109 protein (454 aa).

Positions 1-29 form a signal peptide, tat-type signal; that stretch reads MFAMKRREFIAASAAVAASSLLPQTPAWA. NAD(+) contacts are provided by residues 43-44, Asp-65, 116-119, 136-137, and Asn-165; these read MR, WEYH, and EV. Tyr-194 contacts substrate. 224–228 is an NAD(+) binding site; that stretch reads SEARW. Substrate is bound by residues Arg-229, 241–244, and Tyr-324; that span reads YPSH. Position 241 (Tyr-241) interacts with NAD(+).

The protein belongs to the Gfo/Idh/MocA family. Glycosyl hydrolase 109 subfamily. The cofactor is NAD(+). In terms of processing, predicted to be exported by the Tat system. The position of the signal peptide cleavage has not been experimentally proven.

In terms of biological role, glycosidase. The protein is Glycosyl hydrolase family 109 protein of Stenotrophomonas maltophilia (strain K279a).